We begin with the raw amino-acid sequence, 134 residues long: Small ribosomal subunit protein uS11 (134 aa).

The protein belongs to the universal ribosomal protein uS11 family. Part of the 30S ribosomal subunit. Interacts with proteins S7 and S18. Binds to IF-3.

Functionally, located on the platform of the 30S subunit, it bridges several disparate RNA helices of the 16S rRNA. Forms part of the Shine-Dalgarno cleft in the 70S ribosome. The chain is Small ribosomal subunit protein uS11 from Acidovorax ebreus (strain TPSY) (Diaphorobacter sp. (strain TPSY)).